The chain runs to 234 residues: UDP-2,3-diacylglucosamine hydrolase (234 aa).

Mn(2+) contacts are provided by Asp-9, His-11, Asp-42, Asn-80, and His-115. A substrate-binding site is contributed by 80 to 81 (NR). Substrate-binding residues include Asp-123, Ser-161, Lys-165, Lys-168, and His-196. Residues His-196 and His-198 each coordinate Mn(2+).

This sequence belongs to the LpxH family. The cofactor is Mn(2+).

It localises to the cell inner membrane. It catalyses the reaction UDP-2-N,3-O-bis[(3R)-3-hydroxytetradecanoyl]-alpha-D-glucosamine + H2O = 2-N,3-O-bis[(3R)-3-hydroxytetradecanoyl]-alpha-D-glucosaminyl 1-phosphate + UMP + 2 H(+). The protein operates within glycolipid biosynthesis; lipid IV(A) biosynthesis; lipid IV(A) from (3R)-3-hydroxytetradecanoyl-[acyl-carrier-protein] and UDP-N-acetyl-alpha-D-glucosamine: step 4/6. Hydrolyzes the pyrophosphate bond of UDP-2,3-diacylglucosamine to yield 2,3-diacylglucosamine 1-phosphate (lipid X) and UMP by catalyzing the attack of water at the alpha-P atom. Involved in the biosynthesis of lipid A, a phosphorylated glycolipid that anchors the lipopolysaccharide to the outer membrane of the cell. The protein is UDP-2,3-diacylglucosamine hydrolase of Histophilus somni (strain 129Pt) (Haemophilus somnus).